The chain runs to 215 residues: uncharacterized protein (215 aa).

The disordered stretch occupies residues 120–147 (HRAPQGTSSYQEGRRAHEATSAESDDDN).

This is an uncharacterized protein from Homo sapiens (Human).